The primary structure comprises 166 residues: Ribosome maturation factor RimM (166 aa).

One can recognise a PRC barrel domain in the interval 91–163; sequence DDGFYDHELE…TCVITPPEGL (73 aa).

This sequence belongs to the RimM family. Binds ribosomal protein uS19.

The protein localises to the cytoplasm. An accessory protein needed during the final step in the assembly of 30S ribosomal subunit, possibly for assembly of the head region. Essential for efficient processing of 16S rRNA. May be needed both before and after RbfA during the maturation of 16S rRNA. It has affinity for free ribosomal 30S subunits but not for 70S ribosomes. In Corynebacterium diphtheriae (strain ATCC 700971 / NCTC 13129 / Biotype gravis), this protein is Ribosome maturation factor RimM.